The following is a 279-amino-acid chain: Energy-coupling factor transporter ATP-binding protein EcfA1 (279 aa).

Residues 8 to 240 form the ABC transporter domain; the sequence is IKFENVSFSY…KQFLRDINLD (233 aa). 41-48 is a binding site for ATP; it reads GHNGSGKS.

Belongs to the ABC transporter superfamily. Energy-coupling factor EcfA family. In terms of assembly, forms a stable energy-coupling factor (ECF) transporter complex composed of 2 membrane-embedded substrate-binding proteins (S component), 2 ATP-binding proteins (A component) and 2 transmembrane proteins (T component).

It is found in the cell membrane. Its function is as follows. ATP-binding (A) component of a common energy-coupling factor (ECF) ABC-transporter complex. Unlike classic ABC transporters this ECF transporter provides the energy necessary to transport a number of different substrates. This is Energy-coupling factor transporter ATP-binding protein EcfA1 from Mycoplasmoides gallisepticum (strain R(low / passage 15 / clone 2)) (Mycoplasma gallisepticum).